A 134-amino-acid chain; its full sequence is Phosphoribosyl-AMP cyclohydrolase (134 aa).

Residue Asp80 participates in Mg(2+) binding. Zn(2+) is bound at residue Cys81. Mg(2+)-binding residues include Asp82 and Asp84. Residues Cys98 and Cys105 each contribute to the Zn(2+) site.

This sequence belongs to the PRA-CH family. Homodimer. Mg(2+) serves as cofactor. Zn(2+) is required as a cofactor.

The protein localises to the cytoplasm. The enzyme catalyses 1-(5-phospho-beta-D-ribosyl)-5'-AMP + H2O = 1-(5-phospho-beta-D-ribosyl)-5-[(5-phospho-beta-D-ribosylamino)methylideneamino]imidazole-4-carboxamide. It functions in the pathway amino-acid biosynthesis; L-histidine biosynthesis; L-histidine from 5-phospho-alpha-D-ribose 1-diphosphate: step 3/9. In terms of biological role, catalyzes the hydrolysis of the adenine ring of phosphoribosyl-AMP. In Bordetella avium (strain 197N), this protein is Phosphoribosyl-AMP cyclohydrolase.